A 383-amino-acid polypeptide reads, in one-letter code: Na(+)/H(+) antiporter NhaA (383 aa).

Helical transmembrane passes span 14 to 34 (AGGILLVIAAAIAMTIANSPL), 47 to 67 (FGMSVSHWINDGLMAVFFLLI), 87 to 107 (IFPAIAAVGGMLAPALIYVAF), 117 to 137 (GWAIPAATDIAFALGIMALLG), 146 to 166 (VFLLALAIIDDLGVVVIIALF), 171 to 191 (LSSMALLVGFVMTGVLFMLNA), 205 to 225 (AILWFAVLKSGVHATLAGVVI), 252 to 272 (VAFGILPLFAFANAGISLEGV), 280 to 300 (MLPLGIALGLLIGKPLGIFSF), 321 to 341 (IFAVSVLCGIGFTMSIFISSL), and 356 to 376 (LGILMGSTTAAVLGYALLHFS).

The protein belongs to the NhaA Na(+)/H(+) (TC 2.A.33) antiporter family.

It localises to the cell inner membrane. The enzyme catalyses Na(+)(in) + 2 H(+)(out) = Na(+)(out) + 2 H(+)(in). It carries out the reaction Li(+)(in) + 2 H(+)(out) = Li(+)(out) + 2 H(+)(in). With respect to regulation, activity is regulated by pH. Active at alkaline pH. Amiloride strongly reduces affinity for Na(+), but does not change the Vmax. In terms of biological role, na(+)/H(+) antiporter that extrudes sodium in exchange for external protons. Can also transport lithium and potassium. The polypeptide is Na(+)/H(+) antiporter NhaA (Vibrio parahaemolyticus serotype O3:K6 (strain RIMD 2210633)).